Consider the following 193-residue polypeptide: Segregation and condensation protein B (193 aa).

This sequence belongs to the ScpB family. As to quaternary structure, homodimer. Homodimerization may be required to stabilize the binding of ScpA to the Smc head domains. Component of a cohesin-like complex composed of ScpA, ScpB and the Smc homodimer, in which ScpA and ScpB bind to the head domain of Smc. The presence of the three proteins is required for the association of the complex with DNA.

The protein resides in the cytoplasm. Participates in chromosomal partition during cell division. May act via the formation of a condensin-like complex containing Smc and ScpA that pull DNA away from mid-cell into both cell halves. The sequence is that of Segregation and condensation protein B from Streptococcus thermophilus (strain CNRZ 1066).